The sequence spans 124 residues: Galanin peptides (124 aa).

Residues 1 to 19 form the signal peptide; that stretch reads MARGSVILLGWLLLVVTLS. The propeptide occupies 20 to 30; it reads ATLGLGMPAKE. A Threonine amide modification is found at threonine 61. Residues serine 117 and serine 118 each carry the phosphoserine modification.

The protein belongs to the galanin family. Expressed in retinal progenitor cells and retinal ganglion cells (at protein level).

The protein localises to the secreted. Functionally, endocrine hormone of the central and peripheral nervous systems that binds and activates the G protein-coupled receptors GALR1, GALR2, and GALR3. This small neuropeptide may regulate diverse physiologic functions including contraction of smooth muscle of the gastrointestinal and genitourinary tract, growth hormone and insulin release and adrenal secretion. The protein is Galanin peptides (Gal) of Mus musculus (Mouse).